The following is a 146-amino-acid chain: Small ribosomal subunit protein uS9x (146 aa).

Belongs to the universal ribosomal protein uS9 family.

Its subcellular location is the cytoplasm. The chain is Small ribosomal subunit protein uS9x (RPS16C) from Arabidopsis thaliana (Mouse-ear cress).